The following is a 384-amino-acid chain: SAGA complex subunit Spt3 (384 aa).

It belongs to the SPT3 family. As to quaternary structure, component of the Spt-Ada-Gcn5 acetyltransferase (SAGA) complex consisting of wda/Taf5L, Saf6, Taf9, Taf10b, Taf12, Ada1, Spt3, Spt7, Spt20, Sf3b3, Sf3b5, Nipped-A/Tra1, a histone acetyltransferase (HAT) module made up of Gcn5, Ada2b (Isoform B), Ada3 and Sgf29, and a deubiquitinase (DUB) module made up of not/nonstop, Sgf11 and e(y)2 tethered to SAGA by Atxn7. Taf5 and Taf10, which has partially redundant properties with Taf10b, may also be part of this complex.

Its subcellular location is the nucleus. It localises to the chromosome. Component of the transcription regulatory complex SAGA, a multiprotein complex that activates transcription by remodeling chromatin and mediating histone acetylation and deubiquitination. The SAGA complex predominantly acetylates histone H3. Required for oogenesis; involved in transcriptional activation. The polypeptide is SAGA complex subunit Spt3 (Drosophila melanogaster (Fruit fly)).